The primary structure comprises 359 residues: Nicotinate N-methyltransferase 1 (359 aa).

D226 lines the S-adenosyl-L-methionine pocket.

The protein belongs to the class I-like SAM-binding methyltransferase superfamily. Cation-independent O-methyltransferase family. In terms of tissue distribution, highly expressed in anthers, pistils, developing siliques, and developing seeds.

It is found in the cytoplasm. Its subcellular location is the cytosol. It catalyses the reaction nicotinate + S-adenosyl-L-methionine = N-methylnicotinate + S-adenosyl-L-homocysteine. Functionally, involved in nicotinate detoxification in planta. Catalyzes the conversion of nicotinate to N-methylnicotinate, which is a detoxified form of endogenous nicotinate in planta. The protein is Nicotinate N-methyltransferase 1 of Arabidopsis thaliana (Mouse-ear cress).